Here is a 941-residue protein sequence, read N- to C-terminus: MQLFQNILVSIALLTQIVFAIEITENKVDRGTVTLNLSDITIYPGASWSIIDNAYTSFVGKLDVRDGAGLYISSTSHLLALQVSLTALLHSITNNGVVSFDSRISRTSSSYDLRGVSFTNNGEMYFAASGEFSSPTALTSASWTNTGLLSFYQNQRTSGTVSLGMPLGSITNTGQVCLNNQVYEQTTQIKGSGCFTANGDSTIYISNVLLAVSPKQNFYLTDKGSSMIVQAVSTTQTFNVYGFGEGNKIGLTIPLMGNLWNSAYAYDTTSGILTLRNLLLEQKFNIGTGYDPSKFQVVTDSGSGIPSTILGSVAYYGRVPERTLPKSCQIPCKPIPEAPGTTPTQYTTTITKTNTAGNTVTESGVVNVSTDKGGSWFTTTSMFPALSTAPSTATVFSSDTIMSTVEPDTTELASLTDIPIETSSVEELLSVMSNWEISSAPTLSIETPVSSHHSSMQHSSFESSADINTVFSSESAFETASDYIVSTPSSISHSTMVPQSSVSALSVVSESLASAEPSFVVPSESFIFSASSAAPQPSSSTYSVSFTTQFETPSSAGPSLVTSVESNTELISSATQSSDIQTEFTSTWTTTNSDGSVVTESGIISQSGTSLTTLTTFQPATSLVVPPYSVIETEFTSTWTTTNSDSSVATESGVVSQSDTLLTTVTTFPPAPSAIVPEFTSPWKINTSIESSETLTVSASSYETVGESLAAATSSYLSSATVVVAPSESEINTSSSILNNEEIASAPVSDTTSIAEHHDGSLSMTTTEFVNSNSLPSSHSIVTATITSCNKSKCSESVVTYVSSVSCATITVGDSEKNISTVGNNVSSIVGDDVSNTQAITMATSTEGATTLTSVSGAKPSVANDATNSVHTTDYTTATTGVQNGSSLSIPSDIPIEISVITPTNSSSSAITIPYENGSNKESIENIKYLALVVFGLMMFM.

The first 20 residues, 1–20 (MQLFQNILVSIALLTQIVFA), serve as a signal peptide directing secretion. The GPI-anchor amidated asparagine moiety is linked to residue Asn917. Positions 918 to 941 (GSNKESIENIKYLALVVFGLMMFM) are cleaved as a propeptide — removed in mature form.

Belongs to the HYR1/IFF family. The GPI-anchor is attached to the protein in the endoplasmic reticulum and serves to target the protein to the cell surface. There, the glucosamine-inositol phospholipid moiety is cleaved off and the GPI-modified mannoprotein is covalently attached via its lipidless GPI glycan remnant to the 1,6-beta-glucan of the outer cell wall layer.

It localises to the secreted. Its subcellular location is the cell wall. The protein resides in the membrane. Its function is as follows. GPI-anchored cell wall protein involved in cell wall organization, hyphal growth, as well as in host-fungal interaction and virulence. This is Cell wall protein IFF9 (IFF9) from Candida albicans (strain SC5314 / ATCC MYA-2876) (Yeast).